The chain runs to 149 residues: NPC intracellular cholesterol transporter 2 (149 aa).

An N-terminal signal peptide occupies residues 1–19 (MRFLAATILLLALVAASQA). Cystine bridges form between Cys27-Cys140, Cys42-Cys47, and Cys93-Cys99. Residues Asn58 and Asn69 are each glycosylated (N-linked (GlcNAc...) asparagine). Lys116 carries the N6-acetyllysine modification.

Belongs to the NPC2 family. As to quaternary structure, interacts with NPC1 (via the second lumenal domain) in a cholestrol-dependent manner. Interacts with NUS1/NgBR, the interaction stabilizes NCP2 and regulates cholesterol trafficking. Interacts with DHDDS. Interacts with NEDD4L (via C2 domain). Interacts with NPC1L1. Post-translationally, N-glycosylated. Detected in liver and bile. Detected in epididymis (at protein level). Detected in caput epididymis, corpus epididymis, cauda epididymis and ovary.

Its subcellular location is the secreted. It is found in the endoplasmic reticulum. The protein localises to the lysosome. The enzyme catalyses cholesterol(in) = cholesterol(out). Intracellular cholesterol transporter which acts in concert with NPC1 and plays an important role in the egress of cholesterol from the lysosomal compartment. Unesterified cholesterol that has been released from LDLs in the lumen of the late endosomes/lysosomes is transferred by NPC2 to the cholesterol-binding pocket in the N-terminal domain of NPC1. May bind and mobilize cholesterol that is associated with membranes. NPC2 binds cholesterol with a 1:1 stoichiometry. Can bind a variety of sterols, including lathosterol, desmosterol and the plant sterols stigmasterol and beta-sitosterol. The secreted form of NCP2 regulates biliary cholesterol secretion via stimulation of ABCG5/ABCG8-mediated cholesterol transport. This is NPC intracellular cholesterol transporter 2 from Mus musculus (Mouse).